A 66-amino-acid polypeptide reads, in one-letter code: Large ribosomal subunit protein bL33c (66 aa).

The protein belongs to the bacterial ribosomal protein bL33 family.

It localises to the plastid. The protein resides in the chloroplast. This is Large ribosomal subunit protein bL33c from Lobularia maritima (Sweet alyssum).